The primary structure comprises 497 residues: MASLLDRYLRNISDKSQQNLASVAYLASLDHLLHAFPSIGQSIVQELKSQRSRLKMIASENFSSLSVQLAMGNLLTDKYCEGSPFKRFYSCCENVDAIEWECAETAKELFGAESAFVQPHSGADANLLAIMSIITQKIQSPAVQRLGYKTINDLPEQEYEALKAEMAQHKCLGPSLNSGGHLTHGTVRMNIMSKLMHCLPYEVNLDTELFDYDEIAKIAKEHKPTVLIAGYSSYSRRLNFATLKQIAEDCGAVLWVDMAHFAGLVAGGVFVGEENPMPYADIVTTTTHKTLRGPRGGLVLAKKEYANTLNKACPLMMGGPLPHVIAAKAIALKEAMTINFRKYAHKVVENARTLAEVFQRNGLRLLTGGTDNHMLIIDLTSLGVPGRIAEDMLTSVGIAVNRNTIPSDASGQWKTSGIRLGTPALTTLGMGSAEMEEVANIIVKVLRNITVRSNAESGSSKSEGELSEGIAQEARQRVADLLGRFPLYPEIDLETLV.

(6S)-5,6,7,8-tetrahydrofolate-binding positions include L176 and 180 to 182 (GHL). The residue at position 289 (K289) is an N6-(pyridoxal phosphate)lysine.

It belongs to the SHMT family. In terms of assembly, homodimer. Requires pyridoxal 5'-phosphate as cofactor.

It localises to the cytoplasm. It catalyses the reaction (6R)-5,10-methylene-5,6,7,8-tetrahydrofolate + glycine + H2O = (6S)-5,6,7,8-tetrahydrofolate + L-serine. The protein operates within one-carbon metabolism; tetrahydrofolate interconversion. It functions in the pathway amino-acid biosynthesis; glycine biosynthesis; glycine from L-serine: step 1/1. Its function is as follows. Catalyzes the reversible interconversion of serine and glycine with tetrahydrofolate (THF) serving as the one-carbon carrier. This reaction serves as the major source of one-carbon groups required for the biosynthesis of purines, thymidylate, methionine, and other important biomolecules. Also exhibits THF-independent aldolase activity toward beta-hydroxyamino acids, producing glycine and aldehydes, via a retro-aldol mechanism. This Chlamydia trachomatis serovar A (strain ATCC VR-571B / DSM 19440 / HAR-13) protein is Serine hydroxymethyltransferase.